A 358-amino-acid chain; its full sequence is Peptide chain release factor 1 (358 aa).

Q234 carries the post-translational modification N5-methylglutamine.

It belongs to the prokaryotic/mitochondrial release factor family. Methylated by PrmC. Methylation increases the termination efficiency of RF1.

It localises to the cytoplasm. Peptide chain release factor 1 directs the termination of translation in response to the peptide chain termination codons UAG and UAA. This is Peptide chain release factor 1 from Leifsonia xyli subsp. xyli (strain CTCB07).